Consider the following 199-residue polypeptide: Thioredoxin peroxidase (199 aa).

Residues 6-165 (AKLNHPAPHF…TLRLVKAFQF (160 aa)) form the Thioredoxin domain. The active-site Cysteine sulfenic acid (-SOH) intermediate is Cys52. The disordered stretch occupies residues 179-199 (PGSKTMKADPNGSQDYFSSMN). Positions 189–199 (NGSQDYFSSMN) are enriched in polar residues.

The protein belongs to the peroxiredoxin family. AhpC/Prx1 subfamily. In terms of assembly, homodimer; disulfide-linked, upon oxidation.

It carries out the reaction a hydroperoxide + [thioredoxin]-dithiol = an alcohol + [thioredoxin]-disulfide + H2O. Thiol-specific peroxidase that catalyzes the reduction of hydrogen peroxide and organic hydroperoxides to water and alcohols, respectively. Plays a role in cell protection against oxidative stress by detoxifying peroxides and as sensor of hydrogen peroxide-mediated signaling events. This chain is Thioredoxin peroxidase, found in Trypanosoma brucei rhodesiense.